The following is a 594-amino-acid chain: Choline dehydrogenase, mitochondrial (594 aa).

Residues 1–29 (MWCLLRGLGRPGALARGALGQQQSLGARA) constitute a mitochondrion transit peptide. 42–71 (SYVVVGAGSAGCVLAGRLTEDPAERVLLLE) contributes to the FAD binding site. Lys436 is subject to N6-succinyllysine. N6-acetyllysine; alternate is present on residues Lys484 and Lys496. Residues Lys484 and Lys496 each carry the N6-succinyllysine; alternate modification. The Proton acceptor role is filled by His511. Lys580 carries the post-translational modification N6-acetyllysine.

Belongs to the GMC oxidoreductase family. It depends on FAD as a cofactor.

Its subcellular location is the mitochondrion inner membrane. It catalyses the reaction choline + A = betaine aldehyde + AH2. It participates in amine and polyamine biosynthesis; betaine biosynthesis via choline pathway; betaine aldehyde from choline (cytochrome c reductase route): step 1/1. This chain is Choline dehydrogenase, mitochondrial (CHDH), found in Homo sapiens (Human).